The sequence spans 723 residues: Dipeptidyl aminopeptidase BI (723 aa).

The signal sequence occupies residues 1–23 (MKPTSLLLAATVLMSTPITSALA). Residues serine 574, aspartate 659, and histidine 694 each act as charge relay system in the active site.

Belongs to the peptidase S9A family. In terms of assembly, monomer.

Its activity is regulated as follows. Nearly completely inhibited by 0.5 mM ZnCl(2), 0.1 mM N-tosyl-L-lysyl chloromethyl ketone (TLCK) and 0.1 mM leupeptin. Strongly inhibited by 0.5 mM CoCl(2) and 0.1 mM chymostatin. Activity is hardly affected by general serine protease inhibitors phenylmethanesulfonyl fluoride (PMSF), diisopropyl fluorophosphate (DFP) and N-tosyl-L-phenyl-alanyl chloromethyl ketone (TPCK) or by aspartyl protease inhibitor pepstatin A or by CaCl(2) and EDTA. Cysteine protease inhibitors, such as N-ethylmaleimide (NEM), iodoacetic acid and L-trans-epoxysuccinyl-leucylamido(4-guanido)butane (E-64) have no effect on activity. In terms of biological role, sequentially removes dipeptide units (NH3-P2-P1-) from the amino termini of peptides and proteins. Is able to catalyze the removal of Asp-Arg from the amino termini of angiotensins I and II. Has slight endopeptidase activity on N-terminally blocked peptide derivatives which contain arginine residues at the P1 position. Does not hydrolyze Ala-Ala-Ala and Ala-Ala-Ala-Ala substrates or insulin beta chain. This chain is Dipeptidyl aminopeptidase BI, found in Pseudoxanthomonas mexicana.